Reading from the N-terminus, the 462-residue chain is Phospho-2-dehydro-3-deoxyheptonate aldolase AroG (462 aa).

C87 contacts Mn(2+). Phosphoenolpyruvate contacts are provided by residues R126, 283–284 (ER), K306, and R337. Residues H369, E411, and D441 each coordinate Mn(2+).

Homodimer. Interacts with Rv0948c. Mn(2+) is required as a cofactor. The cofactor is Co(2+). Requires Cd(2+) as cofactor.

The enzyme catalyses D-erythrose 4-phosphate + phosphoenolpyruvate + H2O = 7-phospho-2-dehydro-3-deoxy-D-arabino-heptonate + phosphate. The protein operates within metabolic intermediate biosynthesis; chorismate biosynthesis; chorismate from D-erythrose 4-phosphate and phosphoenolpyruvate: step 1/7. Feedback inhibited by tryptophan, tyrosine, phenylalanine and chorismate. Functionally, catalyzes an aldol-like condensation reaction between phosphoenolpyruvate (PEP) and D-erythrose 4-phosphate (E4P) to generate 3-deoxy-D-arabino-heptulosonate 7-phosphate (DAH7P) and inorganic phosphate. In Mycobacterium tuberculosis (strain ATCC 25618 / H37Rv), this protein is Phospho-2-dehydro-3-deoxyheptonate aldolase AroG (aroG).